The sequence spans 484 residues: Cobyric acid synthase (484 aa).

The GATase cobBQ-type domain occupies 248-435 (VLKVIVPVLP…LHGLFEGSQS (188 aa)). The active-site Nucleophile is Cys329. His427 is an active-site residue.

The protein belongs to the CobB/CobQ family. CobQ subfamily.

It participates in cofactor biosynthesis; adenosylcobalamin biosynthesis. Functionally, catalyzes amidations at positions B, D, E, and G on adenosylcobyrinic A,C-diamide. NH(2) groups are provided by glutamine, and one molecule of ATP is hydrogenolyzed for each amidation. The chain is Cobyric acid synthase from Pseudomonas putida (strain ATCC 700007 / DSM 6899 / JCM 31910 / BCRC 17059 / LMG 24140 / F1).